Here is a 345-residue protein sequence, read N- to C-terminus: GDSL esterase/lipase At1g23500 (345 aa).

An N-terminal signal peptide occupies residues 1-24; sequence MNFSLLSTMLMALSSVCLFFVGYA. Residue S42 is the Nucleophile of the active site. N103 carries an N-linked (GlcNAc...) asparagine glycan. Active-site residues include D320 and H323.

It belongs to the 'GDSL' lipolytic enzyme family.

It localises to the secreted. The protein is GDSL esterase/lipase At1g23500 of Arabidopsis thaliana (Mouse-ear cress).